The following is a 291-amino-acid chain: Pyridoxal 5'-phosphate synthase subunit PdxS (291 aa).

D23 contacts D-ribose 5-phosphate. K80 serves as the catalytic Schiff-base intermediate with D-ribose 5-phosphate. Residue G152 participates in D-ribose 5-phosphate binding. D-glyceraldehyde 3-phosphate is bound at residue R164. D-ribose 5-phosphate contacts are provided by residues G213 and 234 to 235 (GS).

The protein belongs to the PdxS/SNZ family. In the presence of PdxT, forms a dodecamer of heterodimers.

It catalyses the reaction aldehydo-D-ribose 5-phosphate + D-glyceraldehyde 3-phosphate + L-glutamine = pyridoxal 5'-phosphate + L-glutamate + phosphate + 3 H2O + H(+). Its pathway is cofactor biosynthesis; pyridoxal 5'-phosphate biosynthesis. In terms of biological role, catalyzes the formation of pyridoxal 5'-phosphate from ribose 5-phosphate (RBP), glyceraldehyde 3-phosphate (G3P) and ammonia. The ammonia is provided by the PdxT subunit. Can also use ribulose 5-phosphate and dihydroxyacetone phosphate as substrates, resulting from enzyme-catalyzed isomerization of RBP and G3P, respectively. The chain is Pyridoxal 5'-phosphate synthase subunit PdxS from Streptococcus pneumoniae (strain P1031).